The following is a 24-amino-acid chain: Lycosin-I (24 aa).

It belongs to the cationic peptide 04 (cupiennin) family. 05 subfamily. Monomer in solution. Small size oligomers on the lipid membranes.

Its subcellular location is the secreted. It localises to the target cell membrane. Antimicrobial peptide that inhibits many reference strains of bacteria and fungi. Is potent against Candida species and multidrug-resistant Acinetobacter baumannii (MDRAB). Is probably localized in the cytoplasm after being transported through the cell wall and membrane. Is able to interact with cell membranes and enter into cell plasma to activate the mitochondrial death pathway to sensitize cancer cells for apoptosis, as well as up-regulates p27 to inhibit cell proliferation. It shows very low effect on normal cells, such as erythrocytes, Hek293t cells. It also potently inhibits tumor cell growth in vitro, and suppresses various tumor growth in vivo when tested in human cancer xenograft models. It interacts with the cell membrane and is then internalized into the cytoplasm of cancer cells to initiate the programmable cell death. In addition, this peptide has the therapeutic effects of anti-hypertension by endothelium-dependent vasodilatation via the NO/sGC/cGMP signaling pathway. In vivo, this peptide also shows a significant ability to inhibit T.gondii invasion and proliferation, making it a potential alternative agent for the treatment of toxoplasmosis. The protein is Lycosin-I of Lycosa singoriensis (Wolf spider).